Reading from the N-terminus, the 648-residue chain is Probable potassium transport system protein Kup 1 (648 aa).

A run of 12 helical transmembrane segments spans residues 25-45 (LTLGALGVVFGDIGTSPIYAF), 57-77 (IVAGEILGVLSLALWALILVV), 113-133 (LVMALGAIGAALFYGDGVITP), 153-173 (SVSRGEILLITSAILIGLFLM), 184-204 (LFGPVCLVWFVTIGGIGLIHI), 219-239 (GVLFMANHGVAGMFVMGAVFL), 263-283 (WLAIVFPALALNYLGQGAFAL), 312-332 (IPLVILATCATVIASQAVITG), 362-382 (IYLPTITMLLFVGVMVLVLGF), 391-411 (AYGVSVSGTMVVTTCLAFLVV), 417-437 (WGWPLTVAVIVPLLLLDLFFF), and 446-466 (EGGWVPLIVAGGVGLLIVTWV).

Belongs to the HAK/KUP transporter (TC 2.A.72) family.

Its subcellular location is the cell inner membrane. It carries out the reaction K(+)(in) + H(+)(in) = K(+)(out) + H(+)(out). Transport of potassium into the cell. Likely operates as a K(+):H(+) symporter. This Rhizorhabdus wittichii (strain DSM 6014 / CCUG 31198 / JCM 15750 / NBRC 105917 / EY 4224 / RW1) (Sphingomonas wittichii) protein is Probable potassium transport system protein Kup 1.